The primary structure comprises 211 residues: N-(5'-phosphoribosyl)anthranilate isomerase (211 aa).

This sequence belongs to the TrpF family.

The catalysed reaction is N-(5-phospho-beta-D-ribosyl)anthranilate = 1-(2-carboxyphenylamino)-1-deoxy-D-ribulose 5-phosphate. It participates in amino-acid biosynthesis; L-tryptophan biosynthesis; L-tryptophan from chorismate: step 3/5. The polypeptide is N-(5'-phosphoribosyl)anthranilate isomerase (Chromohalobacter salexigens (strain ATCC BAA-138 / DSM 3043 / CIP 106854 / NCIMB 13768 / 1H11)).